We begin with the raw amino-acid sequence, 212 residues long: Thymidylate kinase (212 aa).

13 to 20 (GLEGAGKS) contributes to the ATP binding site.

It belongs to the thymidylate kinase family.

The enzyme catalyses dTMP + ATP = dTDP + ADP. Functionally, phosphorylation of dTMP to form dTDP in both de novo and salvage pathways of dTTP synthesis. The polypeptide is Thymidylate kinase (Legionella pneumophila (strain Corby)).